Consider the following 513-residue polypeptide: Glucose-1-phosphate adenylyltransferase small subunit, chloroplastic/amyloplastic (513 aa).

The N-terminal 64 residues, 1-64 (MAMAAAASPS…RRPFFFSPRA (64 aa)), are a transit peptide targeting the chloroplast.

The protein belongs to the bacterial/plant glucose-1-phosphate adenylyltransferase family. Heterotetramer. As to expression, leaves and starchy endosperm.

It localises to the plastid. The protein localises to the chloroplast. The protein resides in the amyloplast. The catalysed reaction is alpha-D-glucose 1-phosphate + ATP + H(+) = ADP-alpha-D-glucose + diphosphate. Its pathway is glycan biosynthesis; starch biosynthesis. Activated by 3'phosphoglycerate, inhibited by orthophosphate. Allosteric regulation. Functionally, this protein plays a role in synthesis of starch. It catalyzes the synthesis of the activated glycosyl donor, ADP-glucose from Glc-1-P and ATP. The chain is Glucose-1-phosphate adenylyltransferase small subunit, chloroplastic/amyloplastic from Hordeum vulgare (Barley).